Here is a 436-residue protein sequence, read N- to C-terminus: Adenylosuccinate synthetase (436 aa).

GTP-binding positions include 12–18 (GDEGKGK) and 40–42 (GHT). Asp-13 functions as the Proton acceptor in the catalytic mechanism. Mg(2+)-binding residues include Asp-13 and Gly-40. IMP-binding positions include 13-16 (DEGK), 38-41 (NAGH), Thr-128, Arg-142, Gln-223, Thr-238, and Arg-302. The Proton donor role is filled by His-41. A substrate-binding site is contributed by 298–304 (TTTGRRR). Residues Arg-304, 330–332 (KLD), and 412–414 (SLG) each bind GTP.

Belongs to the adenylosuccinate synthetase family. In terms of assembly, homodimer. The cofactor is Mg(2+).

It localises to the cytoplasm. It carries out the reaction IMP + L-aspartate + GTP = N(6)-(1,2-dicarboxyethyl)-AMP + GDP + phosphate + 2 H(+). It functions in the pathway purine metabolism; AMP biosynthesis via de novo pathway; AMP from IMP: step 1/2. Its function is as follows. Plays an important role in the de novo pathway of purine nucleotide biosynthesis. Catalyzes the first committed step in the biosynthesis of AMP from IMP. This chain is Adenylosuccinate synthetase, found in Prochlorococcus marinus (strain MIT 9215).